The chain runs to 334 residues: tRNA uridine(34) hydroxylase (334 aa).

The Rhodanese domain maps to 123–217 (SDPDVILVDT…YLEEVKQEES (95 aa)). Cys-177 (cysteine persulfide intermediate) is an active-site residue.

The protein belongs to the TrhO family.

The enzyme catalyses uridine(34) in tRNA + AH2 + O2 = 5-hydroxyuridine(34) in tRNA + A + H2O. In terms of biological role, catalyzes oxygen-dependent 5-hydroxyuridine (ho5U) modification at position 34 in tRNAs. The sequence is that of tRNA uridine(34) hydroxylase from Shewanella putrefaciens (strain CN-32 / ATCC BAA-453).